We begin with the raw amino-acid sequence, 372 residues long: Cytochrome b (372 aa).

4 helical membrane passes run 25-45 (FGSM…FLAI), 69-90 (WIMQ…YIHI), 105-125 (WLSG…GYVL), and 170-190 (FFAL…IHII). Residues His-75 and His-89 each coordinate heme b. Residues His-174 and His-188 each contribute to the heme b site. His-193 provides a ligand contact to a ubiquinone. Helical transmembrane passes span 218–238 (YKDM…LSFS), 280–300 (LGGA…PFTH), 312–332 (LSQI…WTAS), and 339–358 (FISI…ITIP).

This sequence belongs to the cytochrome b family. The cytochrome bc1 complex contains 3 respiratory subunits (MT-CYB, CYC1 and UQCRFS1), 2 core proteins (UQCRC1 and UQCRC2) and probably 6 low-molecular weight proteins. Requires heme b as cofactor.

It is found in the mitochondrion inner membrane. Component of the ubiquinol-cytochrome c reductase complex (complex III or cytochrome b-c1 complex) that is part of the mitochondrial respiratory chain. The b-c1 complex mediates electron transfer from ubiquinol to cytochrome c. Contributes to the generation of a proton gradient across the mitochondrial membrane that is then used for ATP synthesis. The sequence is that of Cytochrome b (MT-CYB) from Naja annulata annulata (Banded water cobra).